The sequence spans 258 residues: MMFKNFPFFKGKKDTSFDHLVEEVKKGYIPEHIAIIMDGNGRWAKRRAMPRIAGHHEGMQVVKKITKFASKLNVKVLTLYAFSTENWKRPKKEVDYLMKLPEEFLGTFLPELIEENVQVRVIGQQDRLPTHTRRAMEKAMEETKENTGLILNFALNYGSRDEIVSAVQHMMKDREEGKVRVEDVSEEMLSSYLMTSSLPDPELLIRTSGELRISNFMLWQIAYSEFWFTDVYWPDFTEEHLLNAITDFQHRGRRFGGV.

Residue aspartate 38 is part of the active site. Aspartate 38 is a Mg(2+) binding site. Substrate-binding positions include 39 to 42 (GNGR), tryptophan 43, arginine 51, histidine 55, and 83 to 85 (STE). The active-site Proton acceptor is asparagine 86. Residues tryptophan 87, arginine 89, arginine 206, and 212–214 (RIS) contribute to the substrate site. Position 225 (glutamate 225) interacts with Mg(2+).

It belongs to the UPP synthase family. Homodimer. The cofactor is Mg(2+).

Functionally, catalyzes the condensation of isopentenyl diphosphate (IPP) with allylic pyrophosphates generating different type of terpenoids. This Bacillus cereus (strain ATCC 10987 / NRS 248) protein is Isoprenyl transferase.